The following is a 542-amino-acid chain: Probable quinate permease (542 aa).

Over 1–22 (MSILALVEDRPTPKEVYNWKIY) the chain is Cytoplasmic. Residues 23–43 (LLAAVASFTSCMIGYDSAFIG) traverse the membrane as a helical segment. Over 44 to 74 (TTLALSSFREEFGFSTMSKTAVNLVSANIVS) the chain is Extracellular. Residues 75–95 (CYQAGAFFGAFFAYPIGHFWG) form a helical membrane-spanning segment. Residues 96 to 97 (RK) are Cytoplasmic-facing. A helical transmembrane segment spans residues 98–118 (WGLLFAGTIFTLGAGLMLGAN). The Extracellular portion of the chain corresponds to 119-130 (GDRGLGLLYGGR). Residues 131–151 (VLAGLGVGAGSNITPIYISEM) form a helical membrane-spanning segment. Over 152–159 (APPSIRGR) the chain is Cytoplasmic. The chain crosses the membrane as a helical span at residues 160-180 (LVGVYELGWQIGGLVGFWINY). Residues 181–193 (GVSETLAPSHKQW) are Extracellular-facing. A helical membrane pass occupies residues 194 to 214 (IIPFAVQLIPSGLLLIGAVFL). Residues 215–285 (KESPRWLFSR…AGTNKKVMYR (71 aa)) lie on the Cytoplasmic side of the membrane. The chain crosses the membrane as a helical span at residues 286-306 (LFLGSMLFFWQNGSGINAINY). The Extracellular segment spans residues 307 to 325 (YSPTVFKSIGLHGANTSMF). Residues 326-346 (STGIFGVVKTVVTFVWLLYLI) traverse the membrane as a helical segment. The Cytoplasmic segment spans residues 347-352 (DRVGRR). A helical membrane pass occupies residues 353-373 (LLLLIGAAGAAVCLLIVGAYI). The Extracellular segment spans residues 374-387 (KIADPASNPTQEMT). The helical transmembrane segment at 388 to 408 (GGGIAAMFFFYLYTVFYTPSW) threads the bilayer. Residues 409 to 456 (NGTPWVMNSEMFEPNMRSLAQACAAASNWLWNFLISRFTPQMFAKMEY) lie on the Cytoplasmic side of the membrane. A helical membrane pass occupies residues 457-477 (GVWFFFASLMLLSIVFVFFLV). The Extracellular segment spans residues 478 to 542 (PETKGIPLES…EHVSEDLPKV (65 aa)). The disordered stretch occupies residues 523-542 (GYSKTGEQQVEHVSEDLPKV). Over residues 531–542 (QVEHVSEDLPKV) the composition is skewed to basic and acidic residues.

It belongs to the major facilitator superfamily. Sugar transporter (TC 2.A.1.1) family. Interacts with creB. In terms of processing, ubiquitinated. Deubiquitinated by creB, probably to control its activity or amount.

Its subcellular location is the cell membrane. In terms of biological role, integral membrane transporter that imports quinic acid to be catabolized as a carbon source. The sequence is that of Probable quinate permease (qutD) from Aspergillus fumigatus (strain ATCC MYA-4609 / CBS 101355 / FGSC A1100 / Af293) (Neosartorya fumigata).